Consider the following 265-residue polypeptide: Ribosomal RNA small subunit methyltransferase A (265 aa).

The S-adenosyl-L-methionine site is built by His-13, Leu-15, Gly-40, Glu-61, Asp-85, and Asn-103.

The protein belongs to the class I-like SAM-binding methyltransferase superfamily. rRNA adenine N(6)-methyltransferase family. RsmA subfamily.

It is found in the cytoplasm. The enzyme catalyses adenosine(1518)/adenosine(1519) in 16S rRNA + 4 S-adenosyl-L-methionine = N(6)-dimethyladenosine(1518)/N(6)-dimethyladenosine(1519) in 16S rRNA + 4 S-adenosyl-L-homocysteine + 4 H(+). Specifically dimethylates two adjacent adenosines (A1518 and A1519) in the loop of a conserved hairpin near the 3'-end of 16S rRNA in the 30S particle. May play a critical role in biogenesis of 30S subunits. The sequence is that of Ribosomal RNA small subunit methyltransferase A from Bordetella bronchiseptica (strain ATCC BAA-588 / NCTC 13252 / RB50) (Alcaligenes bronchisepticus).